The chain runs to 283 residues: Protease HtpX (283 aa).

2 helical membrane-spanning segments follow: residues 4–24 and 33–53; these read ILLF…ILSV and GGIL…SLFL. His139 is a Zn(2+) binding site. Residue Glu140 is part of the active site. His143 lines the Zn(2+) pocket. A run of 2 helical transmembrane segments spans residues 147-167 and 190-210; these read GDMV…IFLS and IYFL…SIIA. Zn(2+) is bound at residue Glu218.

The protein belongs to the peptidase M48B family. Requires Zn(2+) as cofactor.

It localises to the cell inner membrane. This is Protease HtpX from Haemophilus influenzae (strain PittGG).